The primary structure comprises 601 residues: MEHVTEGSWESLPVPLHPKVLSVLRELGFPYMTPVQSATIPLFMKNKDVAAEAVTGSGKTLAFVIPIEEILLRREEKFKKSQVGAIIITPTRELAVQIEEVLSHFTKPFPQFSQILWIGGRNPGEDVARFKELGGNIIVATPGRLEDMFRRKAEGLDLASCVRSLEVLVLDEADRLLDMGFETSINTILEFLPKQRRTGLFSATQTQEVENLVRAGLRNPVRISVKEKGVAASSTQKTPSRLENHYMVCKADEKFNQLVHFLRNHKQEKHLVFFSTCACVEYYGKALETLVKGVKIMCIHGKMKYKRNKIFMEFRKLQSGILVCTDVMARGIDIPEVNWVLQYDPPSNASAFVHRCGRTARIGHGGSALVFLLPMEESYISFLAINQKCPLQEMKLQKNTADLLPKLKAMALGDRAVFEKGMKAFVSYVQAYAKHECNLIFRLKDLDFASLARGFALLRMPKMPELRGKQFPDFVPVDVNTDTIPFKDKIREKQRQKQLLEQQRKEKTENDGRRKFIKNKAWSKQKAKKEKKKKLTEKRKREEGSDVEDEDMEELLNDTRLLKKFKKGKITEEEFEKGLLTSGKRSTNKADLEISDLEDDC.

The Q motif signature appears at 9 to 37 (WESLPVPLHPKVLSVLRELGFPYMTPVQS). The region spanning 40-223 (IPLFMKNKDV…RAGLRNPVRI (184 aa)) is the Helicase ATP-binding domain. Residue 53–60 (AVTGSGKT) coordinates ATP. Positions 171–174 (DEAD) match the DEAD box motif. The Helicase C-terminal domain maps to 254-402 (KFNQLVHFLR…EMKLQKNTAD (149 aa)). Basic and acidic residues predominate over residues 502 to 514 (QQRKEKTENDGRR). Disordered regions lie at residues 502–553 (QQRK…EDME) and 576–601 (EKGL…EDDC). Residues 515–538 (KFIKNKAWSKQKAKKEKKKKLTEK) show a composition bias toward basic residues. Positions 534 to 563 (KLTEKRKREEGSDVEDEDMEELLNDTRLLK) are important for nuclear localization. Phosphoserine is present on residues Ser545 and Ser595.

This sequence belongs to the DEAD box helicase family. DDX55/SPB4 subfamily. In terms of assembly, interacts with 28S rRNA. Interacts with double-stranded RNA substrates in vitro; the interaction stimulates ATPase activity.

It is found in the nucleus. Its subcellular location is the nucleoplasm. It carries out the reaction ATP + H2O = ADP + phosphate + H(+). Probable ATP-binding RNA helicase. Has ATPase activity and is involved in the maturation of precursor large subunit rRNAs. The protein is ATP-dependent RNA helicase DDX55 (DDX55) of Bos taurus (Bovine).